A 476-amino-acid polypeptide reads, in one-letter code: WD repeat, SAM and U-box domain-containing protein 1 (476 aa).

WD repeat units follow at residues 10-47, 52-91, 95-134, 137-176, 178-228, 237-276, and 279-318; these read DHGDDVNCCAFSFSLLATCSLDKTIRLYSLRDFTELPH, FHTYAVHCCCFSPSGHILASCSTDGTTVLWNTENGQMLAV, PSGSPVRVCQFSPDSTCLASGAADGTVVLWNAQSYKLYRC, VKDGSLAACAFSPNGSFFVTGSSCGDLTVWDDKMRCLHSE, AHDL…LGFE, GHCAPVLACAFSHDGQMLVSGSVDKSVIVYDTNTENILHT, and QHTRYVTTCAFAPNTLLLATGSMDKTVNIWQFDLETLCQA. Residues 332 to 396 form the SAM domain; the sequence is WSEEDVSTWL…LRKIEELRTK (65 aa). The 74-residue stretch at 403–476 folds into the U-box domain; it reads GIPDEFICPI…INRWLETHQK (74 aa). At Thr458 the chain carries Phosphothreonine.

The chain is WD repeat, SAM and U-box domain-containing protein 1 (WDSUB1) from Homo sapiens (Human).